The following is a 989-amino-acid chain: Clumping factor A (989 aa).

A signal peptide spans 1-39; that stretch reads MNMKKKEKHAIRKKSIGVASVLVGTLIGFGLLSSKEADA. The short motif at 9 to 20 is the YSIRK-G/S signaling motif element; it reads HAIRKKSIGVAS. 2 disordered regions span residues 34–205 and 529–960; these read SKEA…VSQA and FNNG…SEDE. Residues 40–542 are ligand binding A region; that stretch reads SENSVTQSDS…SGSGDGIDKP (503 aa). Residues 47–65 show a composition bias toward low complexity; it reads SDSASNESKSNDSSSVSAA. Residues 71 to 105 are compositionally biased toward polar residues; the sequence is TNVSDTKTSSNTNNGETSVAQNPAQQETTQSSSTN. Composition is skewed to low complexity over residues 106 to 132 and 143 to 162; these read ATTEETPVTGEATTTTTNQANTPATTQ and NQTSNETTSNDTNTVSSVNS. Polar residues predominate over residues 163 to 205; the sequence is PQNSTNAENVSTTQDTSTEATPSNNESAPQNTDASNKDVVSQA. Acidic residues predominate over residues 547–565; sequence QPDEPGEIEPIPEDSDSDP. Over residues 566 to 598 the composition is skewed to low complexity; the sequence is GSDSGSDSNSDSGSDSGSDSTSDSGSDSASDSD. Residues 599–917 are compositionally biased toward acidic residues; it reads SASDSDSASD…DNDSDSDSNS (319 aa). Low complexity predominate over residues 918–936; the sequence is DSESGSNNNVVPPNSPKNG. The segment covering 943 to 952 has biased composition (basic and acidic residues); sequence NEAKDSKEPL. Positions 952–956 match the LPXTG sorting signal motif; sequence LPDTG. T955 carries the post-translational modification Pentaglycyl murein peptidoglycan amidated threonine. Residues 956-989 constitute a propeptide, removed by sortase; the sequence is GSEDEANTSLIWGLLASLGSLLLFRRKKENKDKK.

It belongs to the serine-aspartate repeat-containing protein (SDr) family.

The protein localises to the secreted. It localises to the cell wall. Functionally, cell surface-associated protein implicated in virulence. Promotes bacterial attachment exclusively to the gamma-chain of human fibrinogen. Induces formation of bacterial clumps, which diminish the ability of group IIA phospholipase A2 to cause bacterial phospholipid hydrolysis and killing. Significantly decreases macrophage phagocytosis possibly thanks to the clumps, clumped bacteria being too large to be phagocytosed. Dominant factor responsible for human platelet aggregation, which may be an important mechanism for initiating infective endocarditis. This is Clumping factor A (clfA) from Staphylococcus aureus (strain N315).